Here is a 201-residue protein sequence, read N- to C-terminus: Orotate phosphoribosyltransferase (201 aa).

Residue 113 to 121 (EDIITTGKS) coordinates 5-phospho-alpha-D-ribose 1-diphosphate. Residues Thr117 and Arg145 each contribute to the orotate site.

This sequence belongs to the purine/pyrimidine phosphoribosyltransferase family. PyrE subfamily. In terms of assembly, homodimer. Mg(2+) serves as cofactor.

The enzyme catalyses orotidine 5'-phosphate + diphosphate = orotate + 5-phospho-alpha-D-ribose 1-diphosphate. The protein operates within pyrimidine metabolism; UMP biosynthesis via de novo pathway; UMP from orotate: step 1/2. Its function is as follows. Catalyzes the transfer of a ribosyl phosphate group from 5-phosphoribose 1-diphosphate to orotate, leading to the formation of orotidine monophosphate (OMP). This chain is Orotate phosphoribosyltransferase, found in Helicobacter pylori (strain ATCC 700392 / 26695) (Campylobacter pylori).